The primary structure comprises 587 residues: 5-aminolevulinate synthase, erythroid-specific, mitochondrial (587 aa).

The transit peptide at 1-49 (MVTAAMLLQRCPVLIRSPTGLLGKMIKTHQFLFGIGRCPILATQGPSFS) directs the protein to the mitochondrion. R163 serves as a coordination point for succinyl-CoA. 2 residues coordinate pyridoxal 5'-phosphate: C258 and F259. Succinyl-CoA is bound by residues S280 and K299. 3 residues coordinate pyridoxal 5'-phosphate: S332, H360, and T388. K391 is a catalytic residue. The residue at position 391 (K391) is an N6-(pyridoxal phosphate)lysine. Residues T420 and T421 each contribute to the pyridoxal 5'-phosphate site. T508 lines the succinyl-CoA pocket.

This sequence belongs to the class-II pyridoxal-phosphate-dependent aminotransferase family. As to quaternary structure, homodimer. Interacts with SUCLA2. Pyridoxal 5'-phosphate is required as a cofactor.

Its subcellular location is the mitochondrion inner membrane. The enzyme catalyses succinyl-CoA + glycine + H(+) = 5-aminolevulinate + CO2 + CoA. It participates in porphyrin-containing compound metabolism; protoporphyrin-IX biosynthesis; 5-aminolevulinate from glycine: step 1/1. Functionally, catalyzes the pyridoxal 5'-phosphate (PLP)-dependent condensation of succinyl-CoA and glycine to form aminolevulinic acid (ALA), with CoA and CO2 as by-products. Contributes significantly to heme formation during erythropoiesis. The protein is 5-aminolevulinate synthase, erythroid-specific, mitochondrial (ALAS2) of Bos taurus (Bovine).